The primary structure comprises 101 residues: Small ribosomal subunit protein bS6 (101 aa).

Belongs to the bacterial ribosomal protein bS6 family.

Binds together with bS18 to 16S ribosomal RNA. The sequence is that of Small ribosomal subunit protein bS6 from Arthrobacter sp. (strain FB24).